A 659-amino-acid polypeptide reads, in one-letter code: Anoctamin-10 (659 aa).

The Cytoplasmic portion of the chain corresponds to 1 to 207 (MRVTLSTLDT…DSIRSYFGET (207 aa)). A helical membrane pass occupies residues 208–228 (IALYFGFLEYFTFALIPMAII). At 229-240 (GLPYYLFVWEDY) the chain is on the extracellular side. Residues 241 to 261 (DKYVIFASFNLIWSTVILEVW) form a helical membrane-spanning segment. Residues 262–316 (KRGCANMTYRWGTLVMKRQFEEPRPGFHGVLGINSVTGREEPLYSSYKRQLRIYL) are Cytoplasmic-facing. The chain crosses the membrane as a helical span at residues 317-337 (VSLPFVCLCLYFSLYVMMIYF). The Extracellular segment spans residues 338-352 (DMEDWALSLHEDSGS). Residues 353–373 (EWTSLLLYVPSIVYAVVIEIM) form a helical membrane-spanning segment. At 374–400 (NRLYRYAAEFLTSWENHRLESAYQNHL) the chain is on the cytoplasmic side. Residues 401-421 (VLKVLVFNFLNCFASLFYIAF) traverse the membrane as a helical segment. Over 422–500 (VLKDMKLLRQ…YLGTFDDYLE (79 aa)) the chain is Extracellular. The helical transmembrane segment at 501 to 521 (LFLQFGYVSLFSCVYPLAAAF) threads the bilayer. Topologically, residues 522–553 (AVLNNFTEVNSDALKMCRVFKRPFAEPSASIG) are cytoplasmic. A helical membrane pass occupies residues 554-574 (VWQLAFETMSVISVVTNCALI). Over 575–590 (GMSPQVNAVFPESKTD) the chain is Extracellular. A helical membrane pass occupies residues 591 to 611 (LVLIVVAVEHALLALKFILAF). Topologically, residues 612–659 (AIPDKPRHIQQKLARLEFESLEALKQQQMKLVAENLKEEYQEDGKEAT) are cytoplasmic.

Belongs to the anoctamin family. In terms of tissue distribution, predominant expression seen in epithelial tissues.

It is found in the cell membrane. Its function is as follows. Does not exhibit calcium-activated chloride channel (CaCC) activity. Can inhibit the activity of ANO1. In Mus musculus (Mouse), this protein is Anoctamin-10 (Ano10).